The primary structure comprises 377 residues: Gap junction gamma-1 protein (377 aa).

Over 1 to 18 (MSWSFLTRLLEEINNHST) the chain is Cytoplasmic. Residues 19–39 (FVGKIWLTVLIIFRIVLTAVG) form a helical membrane-spanning segment. Residues 40–75 (GESIYYDEQSKFTCNTHQPGCENVCYDAFAPLSHVR) are Extracellular-facing. Residues 76 to 96 (FWVFQIILITTPSIMYLGFAM) form a helical membrane-spanning segment. The Cytoplasmic segment spans residues 97–174 (HRIARQPDEQ…RRIKQDGLMK (78 aa)). A disordered region spans residues 129 to 163 (DYEEAEDNQEEDPMICEEEEPEKDSEKGDKKKHDG). A compositionally biased stretch (acidic residues) spans 131 to 151 (EEAEDNQEEDPMICEEEEPEK). A helical membrane pass occupies residues 175–197 (VYVLQLLFRSVFEVGFLMGQYVL). At 198 to 228 (YGFEVIPFFVCSRNPCPHTVDCFVSRPTEKT) the chain is on the extracellular side. A helical transmembrane segment spans residues 229–249 (IFLLIMYAVSALCLFLNLCEL). Residues 250–377 (FHLGIGGIRD…GVGSREKSGL (128 aa)) lie on the Cytoplasmic side of the membrane. Disordered regions lie at residues 266 to 286 (KEIQ…HSVL) and 341 to 377 (AHAS…KSGL). Residues 344–362 (SRSSSPEANSIAAEQNRLN) are compositionally biased toward polar residues.

It belongs to the connexin family. Gamma-type subfamily. In terms of assembly, a connexon is composed of a hexamer of connexins.

The protein resides in the cell membrane. It is found in the cell junction. It localises to the gap junction. Its function is as follows. One gap junction consists of a cluster of closely packed pairs of transmembrane channels, the connexons, through which materials of low MW diffuse from one cell to a neighboring cell. This Xenopus laevis (African clawed frog) protein is Gap junction gamma-1 protein (gjc1).